The chain runs to 293 residues: Methylsterol monooxygenase 1 (293 aa).

Transmembrane regions (helical) follow at residues 55–75 (LIVH…FQFI) and 100–120 (VLLF…YYFT). The Fatty acid hydroxylase domain occupies 145-274 (CAVIEDTWHY…FTWWDRIFGT (130 aa)). The short motif at 157–161 (HRLLH) is the Histidine box-1 element. Positions 170–174 (HKVHH) match the Histidine box-2 motif. A helical transmembrane segment spans residues 199 to 219 (FFIGIVLLCDHVILLWAWVTI). Residues 249–255 (HHDFHHM) carry the Histidine box-3 motif.

The protein belongs to the sterol desaturase family. The cofactor is Fe cation. Post-translationally, ubiquitinated by MARCHF6, leading to proteasomal degradation.

It localises to the endoplasmic reticulum membrane. The enzyme catalyses 4,4-dimethyl-5alpha-cholest-7-en-3beta-ol + 6 Fe(II)-[cytochrome b5] + 3 O2 + 5 H(+) = 4alpha-carboxy-4beta-methyl-5alpha-cholest-7-ene-3beta-ol + 6 Fe(III)-[cytochrome b5] + 4 H2O. It carries out the reaction 4,4-dimethyl-5alpha-cholesta-8,24-dien-3beta-ol + 6 Fe(II)-[cytochrome b5] + 3 O2 + 5 H(+) = 4beta-methylzymosterol-4alpha-carboxylate + 6 Fe(III)-[cytochrome b5] + 4 H2O. It catalyses the reaction 4alpha-methylzymosterol + 6 Fe(II)-[cytochrome b5] + 3 O2 + 5 H(+) = 4alpha-carboxyzymosterol + 6 Fe(III)-[cytochrome b5] + 4 H2O. The catalysed reaction is 4alpha-methyl-5alpha-cholest-7-en-3beta-ol + 6 Fe(II)-[cytochrome b5] + 3 O2 + 5 H(+) = 4alpha-carboxy-5alpha-cholest-7-en-3beta-ol + 6 Fe(III)-[cytochrome b5] + 4 H2O. The enzyme catalyses 4,4-dimethyl-5alpha-cholest-8-en-3beta-ol + 6 Fe(II)-[cytochrome b5] + 3 O2 + 5 H(+) = 4alpha-carboxy-4beta-methyl-5alpha-cholest-8-en-3beta-ol + 6 Fe(III)-[cytochrome b5] + 4 H2O. It carries out the reaction 4alpha-methyl-5alpha-cholest-8-en-3beta-ol + 6 Fe(II)-[cytochrome b5] + 3 O2 + 5 H(+) = 4alpha-carboxy-5alpha-cholest-8-ene-3beta-ol + 6 Fe(III)-[cytochrome b5] + 4 H2O. The protein operates within steroid biosynthesis; zymosterol biosynthesis; zymosterol from lanosterol: step 3/6. It functions in the pathway steroid biosynthesis; cholesterol biosynthesis. In terms of biological role, catalyzes the three-step monooxygenation required for the demethylation of 4,4-dimethyl and 4alpha-methylsterols, which can be subsequently metabolized to cholesterol. The protein is Methylsterol monooxygenase 1 (MSMO1) of Macaca fascicularis (Crab-eating macaque).